Consider the following 463-residue polypeptide: Phosphomethylpyrimidine synthase (463 aa).

Residues Asn-80, Met-109, Tyr-138, His-173, 193 to 195 (SRG), 234 to 237 (DGLR), and Glu-273 contribute to the substrate site. Residue His-277 coordinates Zn(2+). Residue Tyr-300 participates in substrate binding. Residue His-341 participates in Zn(2+) binding. 3 residues coordinate [4Fe-4S] cluster: Cys-421, Cys-424, and Cys-429.

This sequence belongs to the ThiC family. As to quaternary structure, homodimer. Requires [4Fe-4S] cluster as cofactor.

It carries out the reaction 5-amino-1-(5-phospho-beta-D-ribosyl)imidazole + S-adenosyl-L-methionine = 4-amino-2-methyl-5-(phosphooxymethyl)pyrimidine + CO + 5'-deoxyadenosine + formate + L-methionine + 3 H(+). Its pathway is cofactor biosynthesis; thiamine diphosphate biosynthesis. In terms of biological role, catalyzes the synthesis of the hydroxymethylpyrimidine phosphate (HMP-P) moiety of thiamine from aminoimidazole ribotide (AIR) in a radical S-adenosyl-L-methionine (SAM)-dependent reaction. The polypeptide is Phosphomethylpyrimidine synthase (Anaeromyxobacter dehalogenans (strain 2CP-1 / ATCC BAA-258)).